A 316-amino-acid chain; its full sequence is Acetyl-coenzyme A carboxylase carboxyl transferase subunit alpha (316 aa).

The 255-residue stretch at 39–293 (RLQDKSKALT…RGELLAQLKM (255 aa)) folds into the CoA carboxyltransferase C-terminal domain.

Belongs to the AccA family. As to quaternary structure, acetyl-CoA carboxylase is a heterohexamer composed of biotin carboxyl carrier protein (AccB), biotin carboxylase (AccC) and two subunits each of ACCase subunit alpha (AccA) and ACCase subunit beta (AccD).

It is found in the cytoplasm. It carries out the reaction N(6)-carboxybiotinyl-L-lysyl-[protein] + acetyl-CoA = N(6)-biotinyl-L-lysyl-[protein] + malonyl-CoA. The protein operates within lipid metabolism; malonyl-CoA biosynthesis; malonyl-CoA from acetyl-CoA: step 1/1. In terms of biological role, component of the acetyl coenzyme A carboxylase (ACC) complex. First, biotin carboxylase catalyzes the carboxylation of biotin on its carrier protein (BCCP) and then the CO(2) group is transferred by the carboxyltransferase to acetyl-CoA to form malonyl-CoA. The polypeptide is Acetyl-coenzyme A carboxylase carboxyl transferase subunit alpha (Pseudomonas aeruginosa (strain UCBPP-PA14)).